The sequence spans 649 residues: MFEIKARDAMGRLGLIKINGKKIETPTIMPVVHPNPKKQTVSIDLINKLSDVIITNSYITYTTPELREIAENKGIHHLTGFKNVVVTDSGSFQLSVYGNVNVEPMEIIDFQEKIGVDVGTILDIPTAPDVSREKAEKELLETFKRAEDSIQRRNDRNYKLALNGTVQGSTHLDLRRKSAEVMGKMDFEIYPIGAVVPLMEDYRYREVSEIIINSKMHLPTNKPVHLFGCGHPMLFALSVALGCDLFDSAAYALYAKNGRYLTENGTLHLDELKDLKNFPCSCKVCSEYTPKQLQNMKEKERERLLAEHNLYVTFEEIDRIKNAIKDGNLWELVEERCRSHPKLLNGLRVISKYMDFIEKYDPVSKKSGFFYTGYESMARPEIYRHKQRLNRLKFDKIYVTSISEKINTPYSENLNNIPCDVDVLIKDSVFGLVPLNIDTMYPLSQNEIPDLYDFEKNYNNDFISEFLENNAEKVLDISTYNYYISHYNSKKECEKINPDLLRISRMLEYQYGAKIIDNDFEKLSVRRSKTSGRIRNVLLDKEVVFTVRASDNFLIPAKLGAEMLHKKLEFPKYRVIVDKSVEEFARAGKSVYSKFVINCDKELRPFEEVLVVNENDDLLAYGTNLLNSQELMEFDYGVAVNIRGGLKLE.

Asp-88 serves as the catalytic Nucleophile. Positions 123 and 194 each coordinate substrate. Zn(2+)-binding residues include Cys-280, Cys-282, and Cys-285. The PUA domain maps to Lys-572–Lys-647.

The protein belongs to the archaeosine tRNA-ribosyltransferase family. The cofactor is Zn(2+).

It catalyses the reaction guanosine(15) in tRNA + 7-cyano-7-deazaguanine = 7-cyano-7-carbaguanosine(15) in tRNA + guanine. It participates in tRNA modification; archaeosine-tRNA biosynthesis. Functionally, exchanges the guanine residue with 7-cyano-7-deazaguanine (preQ0) at position 15 in the dihydrouridine loop (D-loop) of archaeal tRNAs. The sequence is that of tRNA-guanine(15) transglycosylase from Methanococcus vannielii (strain ATCC 35089 / DSM 1224 / JCM 13029 / OCM 148 / SB).